Here is a 98-residue protein sequence, read N- to C-terminus: NADH-ubiquinone oxidoreductase chain 4L (98 aa).

A run of 3 helical transmembrane segments spans residues 2-22 (PSISTNITLAFITALLGMLIF), 29-49 (SLLCLEGMMLSMFILSTLTIL), and 61-81 (ILLLVFAACEAAVGLALLVTV).

Belongs to the complex I subunit 4L family. In terms of assembly, core subunit of respiratory chain NADH dehydrogenase (Complex I) which is composed of 45 different subunits.

The protein resides in the mitochondrion inner membrane. It catalyses the reaction a ubiquinone + NADH + 5 H(+)(in) = a ubiquinol + NAD(+) + 4 H(+)(out). Core subunit of the mitochondrial membrane respiratory chain NADH dehydrogenase (Complex I) which catalyzes electron transfer from NADH through the respiratory chain, using ubiquinone as an electron acceptor. Part of the enzyme membrane arm which is embedded in the lipid bilayer and involved in proton translocation. The polypeptide is NADH-ubiquinone oxidoreductase chain 4L (MT-ND4L) (Hapalemur aureus (Golden bamboo lemur)).